The primary structure comprises 618 residues: Dihydroxy-acid dehydratase (618 aa).

Residue Asp-81 participates in Mg(2+) binding. Cys-122 contributes to the [2Fe-2S] cluster binding site. The Mg(2+) site is built by Asp-123 and Lys-124. Lys-124 bears the N6-carboxylysine mark. Cys-195 contacts [2Fe-2S] cluster. Mg(2+) is bound at residue Glu-491. Catalysis depends on Ser-517, which acts as the Proton acceptor.

This sequence belongs to the IlvD/Edd family. In terms of assembly, homodimer. It depends on [2Fe-2S] cluster as a cofactor. The cofactor is Mg(2+).

It carries out the reaction (2R)-2,3-dihydroxy-3-methylbutanoate = 3-methyl-2-oxobutanoate + H2O. It catalyses the reaction (2R,3R)-2,3-dihydroxy-3-methylpentanoate = (S)-3-methyl-2-oxopentanoate + H2O. Its pathway is amino-acid biosynthesis; L-isoleucine biosynthesis; L-isoleucine from 2-oxobutanoate: step 3/4. It participates in amino-acid biosynthesis; L-valine biosynthesis; L-valine from pyruvate: step 3/4. Functions in the biosynthesis of branched-chain amino acids. Catalyzes the dehydration of (2R,3R)-2,3-dihydroxy-3-methylpentanoate (2,3-dihydroxy-3-methylvalerate) into 2-oxo-3-methylpentanoate (2-oxo-3-methylvalerate) and of (2R)-2,3-dihydroxy-3-methylbutanoate (2,3-dihydroxyisovalerate) into 2-oxo-3-methylbutanoate (2-oxoisovalerate), the penultimate precursor to L-isoleucine and L-valine, respectively. The protein is Dihydroxy-acid dehydratase of Rhodopseudomonas palustris (strain ATCC BAA-98 / CGA009).